The primary structure comprises 547 residues: MATKLIKHGSKAREQMLEGIDILADAVKVTLGPKGRNVLIEQSFGSPKITKDGVTVAKSIELKDKIRNAGAQLLKSAATKAAEVAGDGTTTATVLARALAREGNKLVAAGYNPMDLKRGMDLAVNAVVEEIKKSSKKINSQEEIAQVGTISSNGDKEIGEKIAKAMEEVGKEGVITVEEAKNFSFDVEVVKGMMFDRGYLSPYFVTNSEKMVAELENPFILLFEKKLSNLQPMLPILEAVVQSQRPLLIIAEDVEGEALATLVVNRLRGGLKVAAVKAPGFGDRRKAMMEDIAILTKGELITEDLGMKLENVSIKSLGTAKRVTISKENTVIVDGNGDKKNIEDRVLQIKSQIAETTSDYDKEKLQERLAKLSGGVAVLKVGGATEVEVKERKDRVEDALAATRAAVEEGVVAGGGVTLLHASQPLTKLKVENKDQQAGIEIVIEALKDPLKQIVENAGENGGVVVGKLLEHKDKNYGFNAQDMQYVDMIKAGIIDPAKVVRTALQDAASVASLIITTETLIVDEPSDKAEPMPMRGGMGGMGGMDF.

ATP contacts are provided by residues 30-33 (TLGP), Lys-51, 87-91 (DGTTT), Gly-415, and Asp-496. The tract at residues 527–547 (SDKAEPMPMRGGMGGMGGMDF) is disordered. Positions 537-547 (GGMGGMGGMDF) are enriched in gly residues.

The protein belongs to the chaperonin (HSP60) family. In terms of assembly, forms a cylinder of 14 subunits composed of two heptameric rings stacked back-to-back. Interacts with the co-chaperonin GroES.

The protein localises to the cytoplasm. It catalyses the reaction ATP + H2O + a folded polypeptide = ADP + phosphate + an unfolded polypeptide.. Together with its co-chaperonin GroES, plays an essential role in assisting protein folding. The GroEL-GroES system forms a nano-cage that allows encapsulation of the non-native substrate proteins and provides a physical environment optimized to promote and accelerate protein folding. The polypeptide is Chaperonin GroEL (Rickettsia rickettsii (strain Sheila Smith)).